Here is a 223-residue protein sequence, read N- to C-terminus: Cytidylate kinase (223 aa).

12 to 20 (GPAGSGKST) serves as a coordination point for ATP.

It belongs to the cytidylate kinase family. Type 1 subfamily.

The protein resides in the cytoplasm. It catalyses the reaction CMP + ATP = CDP + ADP. The enzyme catalyses dCMP + ATP = dCDP + ADP. The polypeptide is Cytidylate kinase (Aster yellows witches'-broom phytoplasma (strain AYWB)).